The primary structure comprises 485 residues: Lysophospholipid acyltransferase 5 (485 aa).

Position 2 is an N-acetylalanine (Ala-2). Transmembrane regions (helical) follow at residues 35–55 (ASEQALRLIISIFLGYPFALF), 82–102 (YNFGTQLYHSLLCIVLQFLIL), 108–128 (TITAVLTTFCVQMGYLLAGYY), 139–158 (WTMPHCVLTLKLIGLAMDYY), 176–196 (IWGVPSLLEISGFSYFYGAFL), 232–252 (LALGLVYLVGYTLLSPHITED), and 283–303 (VTCWLVTEGVCILTGLGFNGL). Residues Asn-336 and His-372 contribute to the active site. The next 3 membrane-spanning stretches (helical) occupy residues 362–382 (GLSLLFLALWHGLHSGYLVCF), 420–440 (LAQQTIHWLFMGYSMTAFCLF), and 448–468 (VYKSIYFLGHVFFLSLLFILP). The Di-lysine motif motif lies at 482 to 485 (KKME).

Belongs to the membrane-bound acyltransferase family.

It localises to the endoplasmic reticulum membrane. The catalysed reaction is a 1-acyl-sn-glycero-3-phosphocholine + an acyl-CoA = a 1,2-diacyl-sn-glycero-3-phosphocholine + CoA. The enzyme catalyses a 1-acyl-sn-glycero-3-phosphoethanolamine + an acyl-CoA = a 1,2-diacyl-sn-glycero-3-phosphoethanolamine + CoA. It catalyses the reaction a 1-acyl-sn-glycero-3-phospho-L-serine + an acyl-CoA = a 1,2-diacyl-sn-glycero-3-phospho-L-serine + CoA. It carries out the reaction (9Z,12Z)-octadecadienoyl-CoA + a 1-acyl-sn-glycero-3-phosphocholine = 1-acyl-2-(9Z,12Z)-octadecadienoyl-sn-glycero-3-phosphocholine + CoA. The catalysed reaction is (5Z,8Z,11Z,14Z)-eicosatetraenoyl-CoA + a 1-acyl-sn-glycero-3-phosphocholine = 1-acyl-2-(5Z,8Z,11Z,14Z-eicosatetraenoyl)-sn-glycero-3-phosphocholine + CoA. The enzyme catalyses dodecanoyl-CoA + 1-hexadecanoyl-sn-glycero-3-phosphocholine = 1-hexadecanoyl-2-dodecanoyl-sn-glycero-3-phosphocholine + CoA. It catalyses the reaction octadecanoyl-CoA + 1-hexadecanoyl-sn-glycero-3-phosphocholine = 1-hexadecanoyl-2-octadecanoyl-sn-glycero-3-phosphocholine + CoA. It carries out the reaction 1-dodecanoyl-sn-glycero-3-phosphocholine + hexadecanoyl-CoA = 1-dodecanoyl-2-hexadecanoyl-sn-glycero-3-phosphocholine + CoA. The catalysed reaction is 1-tetradecanoyl-sn-glycero-3-phosphocholine + hexadecanoyl-CoA = 1-tetradecanoyl-2-hexadecanoyl-sn-glycero-3-phosphocholine + CoA. The enzyme catalyses 1-hexadecanoyl-sn-glycero-3-phosphocholine + hexadecanoyl-CoA = 1,2-dihexadecanoyl-sn-glycero-3-phosphocholine + CoA. It catalyses the reaction 1-octadecanoyl-sn-glycero-3-phosphocholine + hexadecanoyl-CoA = 1-octadecanoyl-2-hexadecanoyl-sn-glycero-3-phosphocholine + CoA. It carries out the reaction 1-(9Z-octadecenoyl)-sn-glycero-3-phosphocholine + hexadecanoyl-CoA = 1-(9Z-octadecenoyl)-2-hexadecanoyl-sn-glycero-3-phosphocholine + CoA. The catalysed reaction is (9Z)-hexadecenoyl-CoA + 1-hexadecanoyl-sn-glycero-3-phosphocholine = 1-hexadecanoyl-2-(9Z-hexadecenoyl)-sn-glycero-3-phosphocholine + CoA. The enzyme catalyses 1-hexadecanoyl-sn-glycero-3-phosphocholine + (9Z)-octadecenoyl-CoA = 1-hexadecanoyl-2-(9Z-octadecenoyl)-sn-glycero-3-phosphocholine + CoA. It catalyses the reaction (9Z,12Z)-octadecadienoyl-CoA + 1-hexadecanoyl-sn-glycero-3-phosphocholine = 1-hexadecanoyl-2-(9Z,12Z-octadecadienoyl)-sn-glycero-3-phosphocholine + CoA. It carries out the reaction 1-dodecanoyl-sn-glycero-3-phosphocholine + (5Z,8Z,11Z,14Z)-eicosatetraenoyl-CoA = 1-dodecanoyl-2-(5Z,8Z,11Z,14Z)-eicosatetraenoyl-sn-glycero-3-phosphocholine + CoA. The catalysed reaction is (5Z,8Z,11Z,14Z)-eicosatetraenoyl-CoA + 1-hexadecanoyl-sn-glycero-3-phosphocholine = 1-hexadecanoyl-2-(5Z,8Z,11Z,14Z-eicosatetraenoyl)-sn-glycero-3-phosphocholine + CoA. The enzyme catalyses 1-octadecanoyl-sn-glycero-3-phosphocholine + (5Z,8Z,11Z,14Z)-eicosatetraenoyl-CoA = 1-octadecanoyl-2-(5Z,8Z,11Z,14Z-eicosatetraenoyl)-sn-glycero-3-phosphocholine + CoA. It catalyses the reaction 1-eicosanoyl-sn-glycero-3-phosphocholine + (5Z,8Z,11Z,14Z)-eicosatetraenoyl-CoA = 1-eicosanoyl-2-(5Z,8Z,11Z,14Z)-eicosatetraenoyl-sn-glycero-3-phosphocholine + CoA. It carries out the reaction 1-(9Z-octadecenoyl)-sn-glycero-3-phosphocholine + (9Z)-octadecenoyl-CoA = 1,2-di-(9Z-octadecenoyl)-sn-glycero-3-phosphocholine + CoA. The catalysed reaction is 1-(9Z-octadecenoyl)-sn-glycero-3-phosphocholine + (9Z,12Z)-octadecadienoyl-CoA = 1-(9Z)-octadecenoyl-2-(9Z,12Z)-octadecadienoyl-sn-glycero-3-phosphocholine + CoA. The enzyme catalyses 1-(9Z-octadecenoyl)-sn-glycero-3-phosphocholine + (5Z,8Z,11Z,14Z)-eicosatetraenoyl-CoA = 1-(9Z)-octadecenoyl-2-(5Z,8Z,11Z,14Z)-icosatetraenoyl-sn-glycero-3-phosphocholine + CoA. It catalyses the reaction a 1-acyl-sn-glycero-3-phosphoethanolamine + (9Z,12Z)-octadecadienoyl-CoA = 1-acyl-2-(9Z,12Z)-octadecadienoyl-sn-glycero-3-phosphoethanolamine + CoA. It carries out the reaction 1-(9Z-octadecenoyl)-sn-glycero-3-phosphoethanolamine + (9Z,12Z)-octadecadienoyl-CoA = 1-(9Z)-octadecenoyl-2-(9Z,12Z)-octadecadienoyl-sn-glycero-3-phosphoethanolamine + CoA. The catalysed reaction is 1-(10Z-heptadecenoyl)-sn-glycero-3-phosphoethanolamine + (9Z,12Z)-octadecadienoyl-CoA = 1-(10Z-heptadecenoyl)-2-(9Z,12Z-octadecadienoyl)-sn-glycero-3-phosphoethanolamine + CoA. The enzyme catalyses a 1-acyl-sn-glycero-3-phosphoethanolamine + (5Z,8Z,11Z,14Z)-eicosatetraenoyl-CoA = 1-acyl-2-(5Z,8Z,11Z,14Z)-eicosatetraenoyl-sn-glycero-3-phosphoethanolamine + CoA. It catalyses the reaction 1-hexadecanoyl-sn-glycero-3-phosphoethanolamine + (5Z,8Z,11Z,14Z)-eicosatetraenoyl-CoA = 1-hexadecanoyl-2-(5Z,8Z,11Z,14Z-eicosatetraenoyl)-sn-glycero-3-phosphoethanolamine + CoA. It carries out the reaction 1-(9Z-octadecenoyl)-sn-glycero-3-phosphoethanolamine + (5Z,8Z,11Z,14Z)-eicosatetraenoyl-CoA = 1-(9Z)-octadecenoyl-2-(5Z,8Z,11Z,14Z)-eicosatetraenoyl-sn-glycero-3-phosphoethanolamine + CoA. The catalysed reaction is 1-(10Z-heptadecenoyl)-sn-glycero-3-phosphoethanolamine + (5Z,8Z,11Z,14Z)-eicosatetraenoyl-CoA = 1-(10Z-heptadecenoyl)-2-(5Z,8Z,11Z,14Z-eicosatetraenoyl)-sn-glycero-3-phosphoethanolamine + CoA. The enzyme catalyses a 1-O-(1Z-alkenyl)-sn-glycero-3-phosphoethanolamine + (5Z,8Z,11Z,14Z)-eicosatetraenoyl-CoA = 1-O-(1Z)-alkenyl-2-(5Z,8Z,11Z,14Z)-eicosatetraenoyl-sn-glycero-3-phosphoethanolamine + CoA. It catalyses the reaction a 1-acyl-sn-glycero-3-phospho-L-serine + (9Z,12Z)-octadecadienoyl-CoA = 1-acyl-2-(9Z,12Z-octadecadienoyl)-sn-glycero-3-phospho-L-serine + CoA. It carries out the reaction a 1-acyl-sn-glycero-3-phospho-L-serine + (5Z,8Z,11Z,14Z)-eicosatetraenoyl-CoA = 1-acyl-2-(5Z,8Z,11Z,14Z-eicosatetraenoyl)-sn-glycero-3-phospho-L-serine + CoA. The catalysed reaction is 1-hexadecanoyl-sn-glycero-3-phospho-L-serine + (9Z)-octadecenoyl-CoA = 1-hexadecanoyl-2-(9Z-octadecenoyl)-sn-glycero-3-phospho-L-serine + CoA. The enzyme catalyses 1-(9Z-octadecenoyl)-sn-glycero-3-phospho-L-serine + (9Z)-octadecenoyl-CoA = 1,2-di-(9Z)-octadecenoyl-sn-glycero-3-phospho-L-serine + CoA. It catalyses the reaction 1-hexadecanoyl-sn-glycero-3-phospho-L-serine + (9Z,12Z)-octadecadienoyl-CoA = 1-hexadecanoyl-2-(9Z,12Z-octadecadienoyl)-sn-glycero-3-phospho-L-serine + CoA. It carries out the reaction 1-(9Z-octadecenoyl)-sn-glycero-3-phospho-L-serine + (9Z,12Z)-octadecadienoyl-CoA = 1-(9Z-octadecenoyl)-2-(9Z,12Z-octadienoyl)-sn-glycero-3-phospho-L-serine + CoA. The catalysed reaction is 1-hexadecanoyl-sn-glycero-3-phospho-L-serine + (5Z,8Z,11Z,14Z)-eicosatetraenoyl-CoA = 1-hexadecanoyl-2-(5Z,8Z,11Z,14Z-eicosatetraenoyl)-sn-glycero-3-phospho-L-serine + CoA. The enzyme catalyses 1-(9Z-octadecenoyl)-sn-glycero-3-phospho-L-serine + (5Z,8Z,11Z,14Z)-eicosatetraenoyl-CoA = 1-(9Z-octadecenoyl)-2-(5Z,8Z,11Z,14Z-eicosatetraenoyl)-sn-glycero-3-phospho-L-serine + CoA. Its pathway is lipid metabolism; phospholipid metabolism. In terms of biological role, lysophospholipid O-acyltransferase (LPLAT) that catalyzes the reacylation step of the phospholipid remodeling process also known as the Lands cycle. Catalyzes transfer of the fatty acyl chain from fatty acyl-CoA to 1-acyl lysophospholipid to form various classes of phospholipids. Converts 1-acyl lysophosphatidylcholine (LPC) into phosphatidylcholine (PC) (LPCAT activity), 1-acyl lysophosphatidylserine (LPS) into phosphatidylserine (PS) (LPSAT activity) and 1-acyl lysophosphatidylethanolamine (LPE) into phosphatidylethanolamine (PE) (LPEAT activity). Favors polyunsaturated fatty acyl-CoAs as acyl donors compared to saturated fatty acyl-CoAs. Has higher activity for LPC acyl acceptors compared to LPEs and LPSs. Can also transfer the fatty acyl chain from fatty acyl-CoA to 1-O-alkyl lysophospholipid or 1-O-alkenyl lysophospholipid with lower efficiency. Acts as a major LPC O-acyltransferase in liver and intestine. As a component of the liver X receptor/NR1H3 or NR1H2 signaling pathway, mainly catalyzes the incorporation of arachidonate into PCs of endoplasmic reticulum (ER) membranes, increasing membrane dynamics and enabling triacylglycerols transfer to nascent very low-density lipoprotein (VLDL) particles. Promotes processing of sterol regulatory protein SREBF1 in hepatocytes, likely by facilitating the translocation of SREBF1-SCAP complex from ER to the Golgi apparatus. Participates in mechanisms by which the liver X receptor/NR1H3 or NR1H2 signaling pathway counteracts lipid-induced ER stress response and inflammation. Down-regulates hepatic inflammation by limiting arachidonic acid availability for synthesis of inflammatory eicosanoids, such as prostaglandins. In enterocytes, acts as a component of a gut-brain feedback loop that coordinates dietary lipid absorption and food intake. Regulates the abundance of PCs containing linoleate and arachidonate in enterocyte membranes, enabling passive diffusion of fatty acids and cholesterol across the membrane for efficient chylomicron assembly. In the intestinal crypt, acts as a component of dietary-responsive phospholipid-cholesterol axis, regulating the biosynthesis of cholesterol and its mitogenic effects on intestinal stem cells. The sequence is that of Lysophospholipid acyltransferase 5 (LPCAT3) from Bos taurus (Bovine).